Here is a 412-residue protein sequence, read N- to C-terminus: Subtilisin-like protease 6 (412 aa).

Residues 1-20 (MGFITKAIPIVLAALSTVNG) form the signal peptide. Residues 21–127 (ARILEAGPHA…VRATTNGTNL (107 aa)) constitute a propeptide that is removed on maturation. One can recognise an Inhibitor I9 domain in the interval 36–120 (KYIVVMKKDV…FIEPDFVVRA (85 aa)). A Peptidase S8 domain is found at 135–412 (SWGLARVSTR…SKLIYNGSGK (278 aa)). Active-site charge relay system residues include D167 and H198. Residues N252, N264, and N325 are each glycosylated (N-linked (GlcNAc...) asparagine). S358 serves as the catalytic Charge relay system. N-linked (GlcNAc...) asparagine glycosylation is present at N408.

It belongs to the peptidase S8 family.

It localises to the secreted. Secreted subtilisin-like serine protease with keratinolytic activity that contributes to pathogenicity. The sequence is that of Subtilisin-like protease 6 (SUB6) from Trichophyton verrucosum (strain HKI 0517).